The following is a 116-amino-acid chain: Nitrogenase-stabilizing/protective protein NifW (116 aa).

It belongs to the NifW family. Homotrimer; associates with NifD.

Its function is as follows. May protect the nitrogenase Fe-Mo protein from oxidative damage. The protein is Nitrogenase-stabilizing/protective protein NifW of Rhodopseudomonas palustris (strain ATCC BAA-98 / CGA009).